Consider the following 192-residue polypeptide: Immunoglobulin superfamily member 23 (192 aa).

The tract at residues M1–P26 is disordered. Residues S7–S18 show a composition bias toward pro residues. The region spanning P20–S128 is the Ig-like domain. N64 is a glycosylation site (N-linked (GlcNAc...) asparagine). The chain crosses the membrane as a helical span at residues L158–I178.

As to expression, expressed in bone and small intestine. Highly expressed in osteoclasts, and low expressed in osteoblasts and peripheral blood mononuclear cells (PBMCs).

The protein resides in the cell membrane. Functionally, may be involved in osteoclast differentiation. In Homo sapiens (Human), this protein is Immunoglobulin superfamily member 23.